Consider the following 639-residue polypeptide: Tetracycline resistance protein TetM from transposon Tn5251 (639 aa).

The tr-type G domain occupies 1-242 (MKIINIGVLA…VITNKFYSST (242 aa)). GTP-binding positions include 10–17 (AHVDAGKT), 74–78 (DTPGH), and 128–131 (NKID).

Belongs to the TRAFAC class translation factor GTPase superfamily. Classic translation factor GTPase family. TetM/TetO subfamily.

Its function is as follows. Abolishes the inhibitory effect of tetracyclin on protein synthesis by a non-covalent modification of the ribosomes. The chain is Tetracycline resistance protein TetM from transposon Tn5251 (tetM(5251)) from Streptococcus pneumoniae.